Consider the following 364-residue polypeptide: PDZ and LIM domain protein 3 (364 aa).

Positions 1–84 constitute a PDZ domain; the sequence is MPQTVILPGP…QLCLKIDRGE (84 aa). Residues Ser18, Ser93, and Ser264 each carry the phosphoserine modification. The 60-residue stretch at 292 to 351 folds into the LIM zinc-binding domain; it reads PLCDKCGSGIVGAVVKARDKYRHPECFVCADCNLNLKQKGYFFIEGELYCETHARARTKP.

In terms of assembly, interacts with ACTN2. Forms a heterodimer with PDLIM4 (via LIM domain). In terms of tissue distribution, isoform 1 is highly expressed in differentiated skeletal muscle. Isoform 2 is heart-specific.

Its subcellular location is the cytoplasm. It is found in the myofibril. The protein resides in the sarcomere. The protein localises to the z line. In terms of biological role, may play a role in the organization of actin filament arrays within muscle cells. The protein is PDZ and LIM domain protein 3 (PDLIM3) of Homo sapiens (Human).